Here is a 552-residue protein sequence, read N- to C-terminus: 2-methyl-1,2-propanediol dehydrogenase (552 aa).

This sequence belongs to the GMC oxidoreductase family. FAD is required as a cofactor.

It is found in the cytoplasm. It carries out the reaction 2-methylpropane-1,2-diol + NAD(+) = 2-hydroxy-2-methylpropanal + NADH + H(+). Functionally, involved in the degradation of methyl tert-butyl ether (MTBE). Catalyzes the conversion of 2-methyl 1,2-propanediol (2-M1,2-PD) to hydroxyisobutyraldehyde. In Mycolicibacterium austroafricanum (Mycobacterium austroafricanum), this protein is 2-methyl-1,2-propanediol dehydrogenase.